We begin with the raw amino-acid sequence, 303 residues long: Signal recognition particle receptor FtsY (303 aa).

GTP-binding positions include 108 to 115, 190 to 194, and 254 to 257; these read GVNGAGKT, DTAGR, and TKLD.

Belongs to the GTP-binding SRP family. FtsY subfamily. Part of the signal recognition particle protein translocation system, which is composed of SRP and FtsY. SRP is a ribonucleoprotein composed of Ffh and a 4.5S RNA molecule.

Its subcellular location is the cell inner membrane. It localises to the cytoplasm. The catalysed reaction is GTP + H2O = GDP + phosphate + H(+). In terms of biological role, involved in targeting and insertion of nascent membrane proteins into the cytoplasmic membrane. Acts as a receptor for the complex formed by the signal recognition particle (SRP) and the ribosome-nascent chain (RNC). Interaction with SRP-RNC leads to the transfer of the RNC complex to the Sec translocase for insertion into the membrane, the hydrolysis of GTP by both Ffh and FtsY, and the dissociation of the SRP-FtsY complex into the individual components. The polypeptide is Signal recognition particle receptor FtsY (Rickettsia bellii (strain RML369-C)).